A 384-amino-acid polypeptide reads, in one-letter code: Alcohol dehydrogenase class-3 (384 aa).

Zn(2+)-binding residues include Cys48, His70, Cys100, Cys103, Cys106, Cys114, and Cys177.

This sequence belongs to the zinc-containing alcohol dehydrogenase family. Class-III subfamily. In terms of assembly, homodimer. Zn(2+) serves as cofactor.

It is found in the cytoplasm. It catalyses the reaction a primary alcohol + NAD(+) = an aldehyde + NADH + H(+). The enzyme catalyses a secondary alcohol + NAD(+) = a ketone + NADH + H(+). The catalysed reaction is S-(hydroxymethyl)glutathione + NADP(+) = S-formylglutathione + NADPH + H(+). It carries out the reaction S-(hydroxymethyl)glutathione + NAD(+) = S-formylglutathione + NADH + H(+). Its function is as follows. Class-III ADH is remarkably ineffective in oxidizing ethanol, but it readily catalyzes the oxidation of long-chain primary alcohols and the oxidation of S-(hydroxymethyl) glutathione. Plays a role in the calcium flux to the cytoplasm in the ASJ sensory neurons upon removal of a nitric oxide stimulus. In Caenorhabditis elegans, this protein is Alcohol dehydrogenase class-3.